Consider the following 727-residue polypeptide: MASCPDSDNSWVLAGSESLPVETLGPESGNDPESERAPRAPQSPSRAAAEESAGTLDGGETVSQNESSKSGPILSEEAEAKQGVLEGDDPGVESPGPGDTEAQGDLEETPEVVGLEPDSQDLEDQSPHRSLPSSPKTAWIREEAHHSSSDDDTDVDVEGLRRRRGREPGTPQPAATLGVEDQVQGEGAGGQLGISLNMCLLGSLVLLGLGVLLFGGLSESESGPLEEVDLQVLPDVESDTEMLEAVGDGQDGLQQLQTSEVLDSVPSLQNMALLLDKLAKENQDIRLLQAQLQAQKEELQSLMRQPKGLEEENARLRGALQQGEASQRALESELQQLRAQLQGLEADCVQGADGLCLQWGRGPQAGQVTKEQGPTGQEPSPGFLEQKKQLEAEAQALRQELERQRRLLGSVQQDLERSLKEAGRGDPARAGLAELGHRLAQKLRGLENWGQHPGVPANVSEAWHQKPHFQNSREPSGKEKWWDRQGDWKTEHWKHKKEASGREKSWRGEEDRELVGRRKEGKPRVEEWAGKKDGKQQRSKEPPRKSGRPHPSGERQKHPRWKEGAKDRHDPLPLWAELSRHKYQAPQGCSGVHECARQEGLAFFGIELAPVRQQELASLLRTYLARLPWAGPLTEELPLSPAYFGEDGIFRHDRLRFRDFVDALEDQLEEVAVRQTGDDDAVDDFEDFIFSHFFGDKALKKRSGKKDKHLQNRVVGPREEHSPHRQG.

The segment covering 1 to 10 has biased composition (polar residues); that stretch reads MASCPDSDNS. Residues 1-135 are disordered; the sequence is MASCPDSDNS…SPHRSLPSSP (135 aa). Residues 39-53 show a composition bias toward low complexity; the sequence is RAPQSPSRAAAEESA. Ser-43 is subject to Phosphoserine. The span at 61–70 shows a compositional bias: polar residues; it reads TVSQNESSKS. Residues Ser-130, Ser-134, Ser-147, Ser-148, and Ser-149 each carry the phosphoserine modification. At Thr-153 the chain carries Phosphothreonine. Coiled coils occupy residues 269-353 and 380-421; these read QNMA…QGAD and SPGF…SLKE. The Nuclear localization signal motif lies at 488–506; the sequence is WKTEHWKHKKEASGREKSW. Disordered regions lie at residues 491 to 568 and 701 to 727; these read EHWK…AKDR and KRSG…HRQG. Composition is skewed to basic and acidic residues over residues 498 to 544, 551 to 568, and 716 to 727; these read EASG…EPPR, PSGE…AKDR, and GPREEHSPHRQG. The Nuclear localization signal signature appears at 696–719; the sequence is DKALKKRSGKKDKHLQNRVVGPRE.

Interacts with ESR1, PBX1, PBX2 and PBX3. Interacts with TEX11.

It is found in the cytoplasm. The protein resides in the cytoskeleton. Its subcellular location is the nucleus. Regulator of pre-B-cell leukemia transcription factors (BPXs) function. Inhibits the binding of PBX1-HOX complex to DNA and blocks the transcriptional activity of E2A-PBX1. Tethers estrogen receptor-alpha (ESR1) to microtubules and allows them to influence estrogen receptors-alpha signaling. This is Pre-B-cell leukemia transcription factor-interacting protein 1 (PBXIP1) from Bos taurus (Bovine).